The chain runs to 548 residues: Telomerase Cajal body protein 1 (548 aa).

The segment at 1 to 142 (MKTLETQPLA…SGEPAAEDEG (142 aa)) is disordered. Over residues 15–31 (PSDQDPAPAHPSPHASP) the composition is skewed to low complexity. Residues serine 26, serine 30, and serine 54 each carry the phosphoserine modification. Phosphoserine; by ATM is present on serine 64. 4 positions are modified to phosphoserine: serine 85, serine 90, serine 112, and serine 114. WD repeat units lie at residues 167-206 (QPEN…YHEG), 222-267 (EGDT…LRAS), 272-313 (NHLD…RDCE), 323-364 (GQSG…ALLG), 365-405 (GHQG…YPLW), and 411-450 (VTTN…NDGK). Phosphothreonine is present on threonine 489. At serine 491 the chain carries Phosphoserine. The segment at 526–548 (SIPDDHQGEKGQGGTEGGVGELI) is disordered. Over residues 535-548 (KGQGGTEGGVGELI) the composition is skewed to gly residues.

This sequence belongs to the TCAB1 family. Component of the telomerase holoenzyme complex composed of one molecule of TERT, one molecule of WRAP53/TCAB1, two molecules of H/ACA ribonucleoprotein complex subunits DKC1, NOP10, NHP2 and GAR1, and a telomerase RNA template component (TERC). The telomerase holoenzyme complex is associated with TEP1, SMG6/EST1A and POT1. Interacts with the chaperonin-containing T-complex (TRiC) complex; which mediates the folding of WRAP53/TCAB1. Interacts with COIL. Interacts with SMN1. Interacts with RNF8. Interacts with histone H2AX. In terms of processing, phosphorylated at Ser-64 by ATM in response to DNA damage, promoting its interaction with histone H2AX and localization to sites of DNA double-strand breaks. As to expression, expressed in all tissues and cell lines examined.

The protein resides in the nucleus. It localises to the cajal body. It is found in the chromosome. The protein localises to the telomere. Functionally, RNA chaperone that plays a key role in telomere maintenance and RNA localization to Cajal bodies. Specifically recognizes and binds the Cajal body box (CAB box) present in both small Cajal body RNAs (scaRNAs) and telomerase RNA template component (TERC). Essential component of the telomerase holoenzyme complex, a ribonucleoprotein complex essential for the replication of chromosome termini that elongates telomeres in most eukaryotes. In the telomerase holoenzyme complex, required to stimulate the catalytic activity of the complex. Acts by specifically binding the CAB box of the TERC RNA and controlling the folding of the CR4/CR5 region of the TERC RNA, a critical step for telomerase activity. In addition, also controls telomerase holoenzyme complex localization to Cajal body. During S phase, required for delivery of TERC to telomeres during S phase and for telomerase activity. In addition to its role in telomere maintenance, also required for Cajal body formation, probably by mediating localization of scaRNAs to Cajal bodies. Also plays a role in DNA repair: phosphorylated by ATM in response to DNA damage and relocalizes to sites of DNA double-strand breaks to promote the repair of DNA double-strand breaks. Acts by recruiting the ubiquitin ligase RNF8 to DNA breaks and promote both homologous recombination (HR) and non-homologous end joining (NHEJ). The chain is Telomerase Cajal body protein 1 from Homo sapiens (Human).